A 469-amino-acid polypeptide reads, in one-letter code: Transcriptional coactivator YAP1 (469 aa).

Residues methionine 1–valine 21 show a composition bias toward pro residues. The segment at methionine 1–glutamate 47 is disordered. Serine 46 is modified (phosphoserine). Threonine 48 carries the phosphothreonine modification. Residues methionine 71 to glutamate 85 are a coiled coil. At lysine 75 the chain carries N6-lactoyllysine. The segment at leucine 76 to threonine 99 is disordered. Phosphoserine occurs at positions 90 and 94. Threonine 95 and threonine 104 each carry phosphothreonine. Serine 112 carries the phosphoserine; by LATS1 and LATS2 modification. 2 positions are modified to phosphoserine: serine 113 and serine 116. The residue at position 136 (threonine 136) is a Phosphothreonine; by MAPK8 and MAPK9. Serine 146 is modified (phosphoserine; by LATS1 and LATS2). 2 consecutive WW domains span residues valine 153 to lysine 186 and glycine 212 to leucine 245. Residues serine 258–leucine 290 form a disordered region. Phosphoserine is present on residues serine 271 and serine 320. The tract at residues glutamine 273–leucine 469 is transactivation domain. Residues glycine 280–glycine 325 adopt a coiled-coil conformation. Serine 333 carries the phosphoserine; by MAPK8 and MAPK9 modification. Over residues threonine 345–tyrosine 357 the composition is skewed to polar residues. Residues threonine 345–serine 405 are disordered. Residues serine 347, serine 348, and serine 354 each carry the phosphoserine modification. Serine 363 carries the phosphoserine; by LATS1 and LATS2 modification. A compositionally biased stretch (polar residues) spans aspartate 365–isoleucine 375. Serine 366 and serine 369 each carry phosphoserine; by CK1. A Phosphotyrosine; by ABL1 modification is found at tyrosine 373. Threonine 378 carries the post-translational modification Phosphothreonine; by MAPK8 and MAPK9. Positions aspartate 393 to serine 405 are enriched in polar residues.

Belongs to the YAP1 family. Part of a complex when phosphorylated that contains DSG3, PKP1, YAP1 and YWHAG; the complex is required for localization of DSG3 and YAP1 to the cell membrane in keratinocytes. Binds to the SH3 domain of the YES kinase. Binds to WBP1 and WBP2. Binds, in vitro, through the WW1 domain, to neural isoforms of ENAH that contain the PPSY motif. The phosphorylated form interacts with YWHAB. Interacts (via WW domains) with LATS1 (via PPxY motif 2). Interacts with LATS2. Interacts (via WW domain 1) with ERBB4 (via PPxY motif 2). Interacts with TEAD1, TEAD2, TEAD3 and TEAD4. Interacts with TP73. Interacts with RUNX1. Interacts with HCK. Interacts (via WW domains) with PTPN14 (via PPxY motif 2); this interaction leads to the cytoplasmic sequestration of YAP1 and inhibits its transcriptional coactivator activity. Interacts (when phosphorylated at Ser-112) with SMAD2, SMAD3 and WWTR1. Interacts with PRRG2 (via cytoplasmic domain). Interacts (via WW domains) with PRRG4 (via cytoplasmic domain). Interacts (phosphorylated) with CLDN18; the interaction sequesters YAP1 away from the nucleus and thereby restricts transcription of YAP1 target genes. Interacts with SMAD1. Interacts with AMOT; the interaction facilitates translocation of YAP1 to the cytoplasm and tight junctions. Interacts with AMOTL2, the interaction is required for ubiquitination of AMOTL2 and localization of YAP1 to tight junctions. Phosphorylated by LATS1 and LATS2; leading to cytoplasmic translocation and inactivation. Phosphorylated by ABL1; leading to YAP1 stabilization, enhanced interaction with TP73 and recruitment onto proapoptotic genes; in response to DNA damage. Phosphorylation at Ser-366 and Ser-369 by CK1 is triggered by previous phosphorylation at Ser-363 by LATS proteins and leads to YAP1 ubiquitination by SCF(beta-TRCP) E3 ubiquitin ligase and subsequent degradation. Phosphorylated at Thr-104, Thr-136, Ser-333 and Thr-378 by MAPK8/JNK1 and MAPK9/JNK2, which is required for the regulation of apoptosis by YAP1. In terms of processing, lactylation by AARS1 promotes nuclear localization and stabilization of YAP1, leading to increased Hippo signaling pathway. Delactylated by SIRT1. Post-translationally, ubiquitinated by SCF(beta-TRCP) E3 ubiquitin ligase. Highly specific to cortical neurons.

The protein localises to the cytoplasm. It localises to the nucleus. The protein resides in the cell junction. It is found in the tight junction. Its subcellular location is the cell membrane. Transcriptional regulator with dual roles as a coactivator and corepressor. Critical downstream regulatory target in the Hippo signaling pathway, crucial for organ size control and tumor suppression by restricting proliferation and promoting apoptosis. The Hippo signaling pathway core involves a kinase cascade featuring STK3/MST2 and STK4/MST1, along with its regulatory partner SAV1, which phosphorylates and activates LATS1/2 in complex with their regulatory protein, MOB1. This activation leads to the phosphorylation and inactivation of the YAP1 oncoprotein and WWTR1/TAZ. Phosphorylation of YAP1 by LATS1/2 prevents its nuclear translocation, thereby regulating the expression of its target genes. The transcriptional regulation of gene expression requires TEAD transcription factors and modulates cell growth, anchorage-independent growth, and induction of epithelial-mesenchymal transition (EMT). Plays a key role in tissue tension and 3D tissue shape by regulating the cortical actomyosin network, acting via ARHGAP18, a Rho GTPase activating protein that suppresses F-actin polymerization. It also suppresses ciliogenesis by acting as a transcriptional corepressor of TEAD4 target genes AURKA and PLK1. In conjunction with WWTR1, regulates TGFB1-dependent SMAD2 and SMAD3 nuclear accumulation. Synergizes with WBP2 to enhance PGR activity. In terms of biological role, attenuates p73-mediated cell death signaling in transcriptional repression-induced atypical death (TRIAD) of neurons. The polypeptide is Transcriptional coactivator YAP1 (Yap1) (Rattus norvegicus (Rat)).